A 213-amino-acid polypeptide reads, in one-letter code: Succinate dehydrogenase subunit 3-1, mitochondrial (213 aa).

The transit peptide at M1–F105 directs the protein to the mitochondrion. H130 provides a ligand contact to heme. Residues I148–L165 traverse the membrane as a helical segment.

Component of complex II composed of eight subunits in plants: four classical SDH subunits SDH1, SDH2, SDH3 and SDH4 (a flavoprotein (FP), an iron-sulfur protein (IP), and a cytochrome b composed of a large and a small subunit.), as well as four subunits unknown in mitochondria from bacteria and heterotrophic eukaryotes. The cofactor is heme. As to expression, expressed in flowers, inflorescences and stems.

The protein resides in the mitochondrion inner membrane. The protein operates within carbohydrate metabolism; tricarboxylic acid cycle. Its function is as follows. Membrane-anchoring subunit of succinate dehydrogenase (SDH). This chain is Succinate dehydrogenase subunit 3-1, mitochondrial, found in Arabidopsis thaliana (Mouse-ear cress).